The following is a 243-amino-acid chain: UPF0246 protein spyM18_2163 (243 aa).

The protein belongs to the UPF0246 family.

The polypeptide is UPF0246 protein spyM18_2163 (Streptococcus pyogenes serotype M18 (strain MGAS8232)).